The chain runs to 308 residues: tRNA pseudouridine synthase B (308 aa).

D47 acts as the Nucleophile in catalysis.

This sequence belongs to the pseudouridine synthase TruB family. Type 1 subfamily.

It catalyses the reaction uridine(55) in tRNA = pseudouridine(55) in tRNA. In terms of biological role, responsible for synthesis of pseudouridine from uracil-55 in the psi GC loop of transfer RNAs. This chain is tRNA pseudouridine synthase B, found in Xanthomonas euvesicatoria pv. vesicatoria (strain 85-10) (Xanthomonas campestris pv. vesicatoria).